The primary structure comprises 1009 residues: MSRGQIIHSGHFMCSNPHDDLVQDEDEEDVEVDVVEDDDKSMEASSSVHHKNKALDEKPVTFYKFGVGKTQSIAIDVSLNKLNKCIKVAYNKMTTPKWKDFKGLRLHWKQRVRLNNVIWRAYYIEFRKKQPEKPKKPFCYFAVPDDDTTHQKIEGSIVEGMYWKRKMEGVCAQYKRWRIRSKHNLVTDKGGMVATCSSTSVSSMTGELKRKRKHTVPKETIESKLRSYEPPVKLQRSQTPKHTISDEFAWDFDDLDNVFTDDFLNSLSEPYMFPDPRDVYSGNNADIMQPGLLPLQPTIEDIMMSLGDDMPDSPPFHNDRDTMRTPTNDQPSISAQQIPQMRRSASSSASLHQMQVAQAQAQSISQISQPSQQLQHQIQIQQPVAARPHEFMASSIMMDYRLMPTRQSSAITSQMLMLSQSASTLSSQPQYATSTHYSTNNSFLPIRNTMTNQHHLGHTSQHSPWNKQQQSNFLVSLPHQSHVERILNNQPPLVPPPSRSNLLPTQNDPYLPQFLQSTQPTPQPQSHDPMMAPSRSWWLDSPLTASVQSPLSVATPLPLANQTGPQTPLGQLIGSADNGFLFGGNNTPGGFKMSGTTSGVPTLSQRLEQPPISRTSTIFGNVENKPERIFTSLTSQNTPTPSPLDISSLSRLRTSSLNESWKMSHIVEGSPTYQAFAASVTTKPSILESPSTSGDISGPASVPVQASQHPPKIITPPSASSKRKEQEAAMAPLVNRQQSCDVNLLNGKMAVKVEEKSGRHYLPTTPTELKEVTKEEPLLMSAPSSVKSMRRQAPDSTLHPEERKRILHLHAEQNRRSALKDGFDQLMDIIPDLYSGGVKPTNAVVLAKSADHIRRLQAEKWDKTQKIDEAKAKIEKLNQKITSLQSNLPQSSAPSSSSQVDSKTSLETFFDRYVKEGAKKNWRFWVMSQMLKPICVTQTNSFASSVAGDSSSRNEVAASCSDWLNKNWKATELRPLASTLLVSLATNSSILAEPDTLPDYVMQQLKNPF.

Disordered stretches follow at residues 1 to 20, 304 to 354, 488 to 531, and 686 to 728; these read MSRGQIIHSGHFMCSNPHDD, MSLG…LHQM, NNQP…DPMM, and ILES…EQEA. Composition is skewed to polar residues over residues 324 to 350 and 499 to 508; these read RTPTNDQPSISAQQIPQMRRSASSSAS and RSNLLPTQND. The segment covering 511–526 has biased composition (low complexity); it reads LPQFLQSTQPTPQPQS. Residues 686–695 are compositionally biased toward polar residues; the sequence is ILESPSTSGD. Residues 803–856 enclose the bHLH domain; the sequence is RKRILHLHAEQNRRSALKDGFDQLMDIIPDLYSGGVKPTNAVVLAKSADHIRRL. The segment at 856-877 is leucine-zipper; that stretch reads LQAEKWDKTQKIDEAKAKIEKL.

Expressed in intestine, neurons, muscle, hypodermis, excretory cell and other tissues.

It is found in the nucleus. It localises to the cytoplasm. Its subcellular location is the mitochondrion. Transcription factor that binds to the E box motif 5'-CACGTG-3', probably in a heterodimeric complex with mxl-2. Involved in modulating longevity in response to TOR signaling, dietary restriction, the decline in protein homeostasis associated with normal aging, germline signaling and the insulin-like signaling pathway. Plays a role in autophagy. Involved in regulating migration of the ray 1 precursor cells in the male tail, acting in concert with Wnt and semaphorin signaling pathways. Regulates transcription of genes encoding extracellular matrix (ECM) components which may contribute to the substratum required for migration of the neighboring ray 1 precursor cells. Involved in repressing infection by the microsporidian pathogen N.parisii, probably acting independently of its canonical partner, mxl-2. In Caenorhabditis elegans, this protein is Protein WBSCR14 homolog (mml-1).